The sequence spans 241 residues: Probable 2-phosphosulfolactate phosphatase (241 aa).

The protein belongs to the ComB family. Mg(2+) serves as cofactor.

It catalyses the reaction (2R)-O-phospho-3-sulfolactate + H2O = (2R)-3-sulfolactate + phosphate. This Caldanaerobacter subterraneus subsp. tengcongensis (strain DSM 15242 / JCM 11007 / NBRC 100824 / MB4) (Thermoanaerobacter tengcongensis) protein is Probable 2-phosphosulfolactate phosphatase.